The primary structure comprises 432 residues: Glutamate-1-semialdehyde 2,1-aminomutase 1 (432 aa).

Lysine 268 is modified (N6-(pyridoxal phosphate)lysine).

It belongs to the class-III pyridoxal-phosphate-dependent aminotransferase family. HemL subfamily. In terms of assembly, homodimer. Pyridoxal 5'-phosphate is required as a cofactor.

It is found in the cytoplasm. It catalyses the reaction (S)-4-amino-5-oxopentanoate = 5-aminolevulinate. The protein operates within porphyrin-containing compound metabolism; protoporphyrin-IX biosynthesis; 5-aminolevulinate from L-glutamyl-tRNA(Glu): step 2/2. The sequence is that of Glutamate-1-semialdehyde 2,1-aminomutase 1 from Bacillus mycoides (strain KBAB4) (Bacillus weihenstephanensis).